A 663-amino-acid chain; its full sequence is Probable methylenetetrahydrofolate reductase (NADPH) (663 aa).

Glutamate 76 acts as the Proton donor/acceptor in catalysis. Residues 76-81 (EFFPPR) and 107-108 (TW) each bind NAD(+). A Phosphothreonine modification is found at threonine 107. Residues 107-108 (TW), histidine 141, 171-173 (RGD), 187-188 (RA), tyrosine 210, 214-217 (HPQA), aspartate 223, and lysine 230 contribute to the FAD site. Aspartate 173 contributes to the substrate binding site. Residues glutamine 241, tyrosine 334, and arginine 338 each contribute to the substrate site. Serine 408 carries the post-translational modification Phosphoserine. Threonine 465 is modified (phosphothreonine). Residues 477–480 (QPET), 497–501 (TVNSQ), threonine 578, and threonine 591 each bind S-adenosyl-L-methionine.

The protein belongs to the methylenetetrahydrofolate reductase family. FAD serves as cofactor.

It carries out the reaction (6S)-5-methyl-5,6,7,8-tetrahydrofolate + NADP(+) = (6R)-5,10-methylene-5,6,7,8-tetrahydrofolate + NADPH + H(+). The protein operates within one-carbon metabolism; tetrahydrofolate interconversion. This chain is Probable methylenetetrahydrofolate reductase (NADPH), found in Caenorhabditis elegans.